A 506-amino-acid polypeptide reads, in one-letter code: NADH-quinone oxidoreductase subunit N (506 aa).

Helical transmembrane passes span 14–34, 40–60, 72–92, 109–129, 131–151, 166–186, 209–229, 256–276, 286–306, 314–334, 343–363, 385–405, 420–440, and 465–485; these read MVPEFIILGAAILLSICDLFF, YVALGAIAAVVLAIVSLITLY, FVLDGFSKGFKTLLLGGAALI, GEYYYLFLMALLGAMFMASSV, FVTLFVGLELLSLSSYILVGI, VINGGIGTAITLFGMSYLYGI, LLLALAFLLLLVGLSFKIATV, MAGFLLIIRLFLMVFASVSVQ, MSIYIAVLASITMIIGNVVAL, LFAYSGIAHAGYLLVPLVALS, FYMLAYMLMNIGAFAIIHGLI, AIVMTIFILSLAGIPGTAGFI, AHYVLASIMMGTTVISFVYYF, and IVMSFCAISIVILGIVPMIGY.

It belongs to the complex I subunit 2 family. As to quaternary structure, NDH-1 is composed of 14 different subunits. Subunits NuoA, H, J, K, L, M, N constitute the membrane sector of the complex.

The protein resides in the cell membrane. The catalysed reaction is a quinone + NADH + 5 H(+)(in) = a quinol + NAD(+) + 4 H(+)(out). Functionally, NDH-1 shuttles electrons from NADH, via FMN and iron-sulfur (Fe-S) centers, to quinones in the respiratory chain. The immediate electron acceptor for the enzyme in this species is believed to be a menaquinone. Couples the redox reaction to proton translocation (for every two electrons transferred, four hydrogen ions are translocated across the cytoplasmic membrane), and thus conserves the redox energy in a proton gradient. In Bacillus anthracis, this protein is NADH-quinone oxidoreductase subunit N.